Consider the following 439-residue polypeptide: 3-phosphoshikimate 1-carboxyvinyltransferase (439 aa).

K27, S28, and R32 together coordinate 3-phosphoshikimate. K27 serves as a coordination point for phosphoenolpyruvate. Residues G101 and R130 each contribute to the phosphoenolpyruvate site. 3-phosphoshikimate contacts are provided by S175, Q177, D326, and K353. Position 177 (Q177) interacts with phosphoenolpyruvate. Residue D326 is the Proton acceptor of the active site. Residues R357 and R399 each contribute to the phosphoenolpyruvate site.

This sequence belongs to the EPSP synthase family. As to quaternary structure, monomer.

It is found in the cytoplasm. It carries out the reaction 3-phosphoshikimate + phosphoenolpyruvate = 5-O-(1-carboxyvinyl)-3-phosphoshikimate + phosphate. The protein operates within metabolic intermediate biosynthesis; chorismate biosynthesis; chorismate from D-erythrose 4-phosphate and phosphoenolpyruvate: step 6/7. Functionally, catalyzes the transfer of the enolpyruvyl moiety of phosphoenolpyruvate (PEP) to the 5-hydroxyl of shikimate-3-phosphate (S3P) to produce enolpyruvyl shikimate-3-phosphate and inorganic phosphate. This Synechococcus sp. (strain CC9311) protein is 3-phosphoshikimate 1-carboxyvinyltransferase.